We begin with the raw amino-acid sequence, 466 residues long: Asparagine--tRNA ligase (466 aa).

It belongs to the class-II aminoacyl-tRNA synthetase family. Homodimer.

It localises to the cytoplasm. It carries out the reaction tRNA(Asn) + L-asparagine + ATP = L-asparaginyl-tRNA(Asn) + AMP + diphosphate + H(+). This Buchnera aphidicola subsp. Acyrthosiphon pisum (strain APS) (Acyrthosiphon pisum symbiotic bacterium) protein is Asparagine--tRNA ligase.